A 284-amino-acid chain; its full sequence is Cuticle collagen dpy-5 (284 aa).

The tract at residues 88-284 (GLPSQGCPAG…PCPERKRRRV (197 aa)) is disordered. 2 triple-helical region regions span residues 94-126 (CPAG…PGLN) and 143-270 (GPPG…VGAD). Positions 106-115 (GEPGGTGPDG) are enriched in gly residues. Residues 163–177 (AGKRGTPGKDGEPGR) show a composition bias toward basic and acidic residues. Composition is skewed to low complexity over residues 181–193 (IGDQ…DGQP), 224–246 (EPGN…TGQP), and 255–271 (DGTP…GADA).

This sequence belongs to the cuticular collagen family. As to quaternary structure, collagen polypeptide chains are complexed within the cuticle by disulfide bonds and other types of covalent cross-links. May be a substrate of bli-4.

In terms of biological role, nematode cuticles are composed largely of collagen-like proteins. The cuticle functions both as an exoskeleton and as a barrier to protect the worm from its environment. The polypeptide is Cuticle collagen dpy-5 (dpy-5) (Caenorhabditis elegans).